The chain runs to 320 residues: 1-aminocyclopropane-1-carboxylate oxidase 2 (320 aa).

Residues 111–143 (DEYRTAMKDFGKRLENLAEDLLDLLCENLGLEK) are a coiled coil. The 101-residue stretch at 156–256 (PTFGTKVSNY…RMSVASFYNP (101 aa)) folds into the Fe2OG dioxygenase domain. Fe cation contacts are provided by His180, Asp182, and His237. Arg247 provides a ligand contact to 2-oxoglutarate.

The protein belongs to the iron/ascorbate-dependent oxidoreductase family. It depends on Fe(2+) as a cofactor. Requires Cu(2+) as cofactor. Expressed in vegetative tissues. Constitutively expressed in leaves and blades. In ethylene exposed etiolated seedlings, localized in cells at the outer side of the exaggerated hook in an ethylene-dependent manner and following an ethylene sensitive pattern. Also detected in the root tip when treated by ethylene.

The catalysed reaction is 1-aminocyclopropane-1-carboxylate + L-ascorbate + O2 = ethene + L-dehydroascorbate + hydrogen cyanide + CO2 + 2 H2O. It functions in the pathway alkene biosynthesis; ethylene biosynthesis via S-adenosyl-L-methionine; ethylene from S-adenosyl-L-methionine: step 2/2. In terms of biological role, enzyme involved in the ethylene biosynthesis. Required to mediate the 1-aminocyclopropane-1-carboxylic acid (ACC)-mediated reversion of the ABA-induced inhibition of seed germination via endosperm rupture. May promote stem elongation by maximizing the extensibility cells, possibly by activating ethylene biosynthesis, in response to very-long-chain fatty acids (VLCFAs C20:0 to C30:0). The polypeptide is 1-aminocyclopropane-1-carboxylate oxidase 2 (ACO2) (Arabidopsis thaliana (Mouse-ear cress)).